A 1394-amino-acid polypeptide reads, in one-letter code: ABC transporter patM (1394 aa).

A disordered region spans residues 1–41; the sequence is MVDNYHSSLDVAKTPIQSDADAQKSEAETEGPSSKSSQIAA. An ABC transporter 1 domain is found at 98–341; it reads SPLQNRQRKQ…FEDLGFECLS (244 aa). A run of 6 helical transmembrane segments spans residues 437-457, 467-487, 511-531, 546-566, 579-599, and 688-708; these read SLWAVELATIVVQSLVLGTLF, LFIFASALFYSVLVPALQSMA, IAYALGLVTTDVVWKVAAICY, GNFFTWFLIIYLEHLALSMFF, AVLPVGIFFNMYVLYTGLYVP, and VGINAALFVFFALCSGIGMEM. The tract at residues 727–755 is disordered; the sequence is VTHRRDKIDSETGQDQGNESSEMSAGQSN. The span at 737 to 755 shows a compositional bias: polar residues; it reads ETGQDQGNESSEMSAGQSN. Residues 767 to 1013 enclose the ABC transporter 2 domain; the sequence is DKSHNLAWTN…EAIQYFQPRS (247 aa). 808–815 lines the ATP pocket; it reads GVSGAGKT. The next 6 helical transmembrane spans lie at 1131-1151, 1177-1197, 1219-1239, 1245-1265, 1280-1300, and 1368-1388; these read GAYNRVFSAFMSLIVGPPLGL, LAFVLSAFIVELPFTFLSSLV, FLMYELFGVFATSLAQLCASL, AAFAANGFFFMFCNTFAGTLS, ISPLFYLGEGVTVDVLQDLPI, and IGVFICFIAFNFTMVLVMTYL.

Belongs to the ABC transporter superfamily. ABCG family. PDR (TC 3.A.1.205) subfamily.

It localises to the vacuole membrane. The protein resides in the cell membrane. Its pathway is mycotoxin biosynthesis; patulin biosynthesis. Functionally, ABC transporter; part of the gene cluster that mediates the biosynthesis of patulin, an acetate-derived tetraketide mycotoxin produced by several fungal species that shows antimicrobial properties against several bacteria. May be involved in the secretion of E-ascladiol to be converted to patulin by the secreted patulin synthase patE. The chain is ABC transporter patM from Penicillium expansum (Blue mold rot fungus).